Consider the following 89-residue polypeptide: MSITPEEKARLMKEFATKEGDTGSPEVQVAILTSRISTLTEHFKSHKKDNHSRRGLLMMVAQRRKLLDYARAKDEGRYQDLIKRLGIRR.

It belongs to the universal ribosomal protein uS15 family. As to quaternary structure, part of the 30S ribosomal subunit. Forms a bridge to the 50S subunit in the 70S ribosome, contacting the 23S rRNA.

One of the primary rRNA binding proteins, it binds directly to 16S rRNA where it helps nucleate assembly of the platform of the 30S subunit by binding and bridging several RNA helices of the 16S rRNA. Functionally, forms an intersubunit bridge (bridge B4) with the 23S rRNA of the 50S subunit in the ribosome. This chain is Small ribosomal subunit protein uS15, found in Jannaschia sp. (strain CCS1).